Consider the following 361-residue polypeptide: Neuronal-specific septin-3 (361 aa).

Residues 1 to 46 (MSEIVPPEVRPKPAVPAKPSHVAPPSSAPFVPSPQGTGGEGQGSGR) form a disordered region. Residues 15–34 (VPAKPSHVAPPSSAPFVPSP) are compositionally biased toward low complexity. The span at 36–46 (GTGGEGQGSGR) shows a compositional bias: gly residues. Residues 70–342 (AGFDFNIMVV…ETYRAKRLND (273 aa)) form the Septin-type G domain. A G1 motif region spans residues 80–87 (GQSGLGKS). GTP-binding positions include 80–87 (GQSGLGKS) and T114. A G3 motif region spans residues 137–140 (DTPG). The segment at 219 to 222 (AKSD) is G4 motif. Residues 220 to 228 (KSDTLTPEE), G276, and R291 each bind GTP. A disordered region spans residues 341-361 (NDNGGLHPISSSGHDTQESNL). Positions 349 to 361 (ISSSGHDTQESNL) are enriched in polar residues.

This sequence belongs to the TRAFAC class TrmE-Era-EngA-EngB-Septin-like GTPase superfamily. Septin GTPase family.

Its subcellular location is the cytoplasm. Functionally, may be involved in cytokinesis. This Danio rerio (Zebrafish) protein is Neuronal-specific septin-3.